The chain runs to 158 residues: Transcription elongation factor GreA (158 aa).

Belongs to the GreA/GreB family.

Functionally, necessary for efficient RNA polymerase transcription elongation past template-encoded arresting sites. The arresting sites in DNA have the property of trapping a certain fraction of elongating RNA polymerases that pass through, resulting in locked ternary complexes. Cleavage of the nascent transcript by cleavage factors such as GreA or GreB allows the resumption of elongation from the new 3'terminus. GreA releases sequences of 2 to 3 nucleotides. This is Transcription elongation factor GreA from Yersinia pestis.